We begin with the raw amino-acid sequence, 543 residues long: Excitatory amino acid transporter 1 (543 aa).

The Cytoplasmic segment spans residues 1 to 47; that stretch reads MTKSNGEEPRMGSRMERFQQGVRKRTLLAKKKVQNITKEDVKSYLFR. Residues 48 to 68 traverse the membrane as a helical segment; the sequence is NAFVLLTVSAVIVGTILGFAL. Topologically, residues 69–86 are extracellular; that stretch reads RPYKMSYREVKYFSFPGE. Residues 87–108 traverse the membrane as a helical segment; it reads LLMRMLQMLVLPLIISSLVTGM. Over 109-122 the chain is Cytoplasmic; that stretch reads AALDSKASGKMGMR. The chain crosses the membrane as a helical span at residues 123-145; that stretch reads AVVYYMTTTIIAVVIGIIIVIII. Residues 146–236 are Extracellular-facing; the sequence is HPGKGTKENM…IREEMVPVPG (91 aa). Residues 237–260 form a helical membrane-spanning segment; that stretch reads SVNGVNALGLVVFSMCFGFVIGNM. Residues 261-269 are Cytoplasmic-facing; that stretch reads KEQGQALRE. Residues 270–297 traverse the membrane as a helical segment; sequence FFDSLNEAIMRLVAVIMWYAPLGILFLI. Residues 298-318 lie on the Extracellular side of the membrane; that stretch reads AGKILEMEDMGVIGGQLAMYT. Residues 319 to 340 form a helical membrane-spanning segment; that stretch reads VTVIVGLLIHAVIVLPLLYFLV. At 341–345 the chain is on the cytoplasmic side; it reads TRKNP. An intramembrane region (discontinuously helical) is located at residues 346-376; that stretch reads WVFIGGLLQALITALGTSSSSATLPITFKCL. L-aspartate is bound at residue 363–365; it reads SSS. Topologically, residues 377-385 are cytoplasmic; it reads EENNGVDKR. Residues 386–412 form a helical membrane-spanning segment; it reads ITRFVLPVGATINMDGTALYEALAAIF. Positions 394, 396, and 398 each coordinate Na(+). Threonine 402 contacts L-aspartate. Over 413–425 the chain is Extracellular; the sequence is IAQVNNFDLNFGQ. The segment at residues 426 to 459 is an intramembrane region (discontinuously helical); it reads IITISITATAASIGAAGIPQAGLVTMVIVLTSVG. An L-aspartate-binding site is contributed by 443–447; sequence IPQAG. Residues 460–472 are Extracellular-facing; that stretch reads LPTDDITLIIAVD. A helical transmembrane segment spans residues 473-494; it reads WFLDRLRTTTNVLGDSLGAGIV. Residues aspartate 476 and asparagine 483 each contribute to the L-aspartate site. The Na(+) site is built by asparagine 483 and aspartate 487. The Cytoplasmic segment spans residues 495 to 543; sequence EHLSRHELKNRDVEMGNSVIEENEMKKPYQLIAQDNEPEKPVADSETKM. Serine 512 carries the post-translational modification Phosphoserine. A disordered region spans residues 522–543; sequence PYQLIAQDNEPEKPVADSETKM. A compositionally biased stretch (basic and acidic residues) spans 531 to 543; it reads EPEKPVADSETKM.

This sequence belongs to the dicarboxylate/amino acid:cation symporter (DAACS) (TC 2.A.23) family. SLC1A3 subfamily. In terms of assembly, homotrimer. In terms of processing, glycosylated. As to expression, detected in brain and cerebellum. Both isoform GLAST-1 and GLAST-1A are expressed in bone and brain. In brain isoform GLAST-1 is highly enriched in the Purkinje cell layer in cerebellum.

Its subcellular location is the cell membrane. It catalyses the reaction K(+)(in) + L-glutamate(out) + 3 Na(+)(out) + H(+)(out) = K(+)(out) + L-glutamate(in) + 3 Na(+)(in) + H(+)(in). The catalysed reaction is K(+)(in) + L-aspartate(out) + 3 Na(+)(out) + H(+)(out) = K(+)(out) + L-aspartate(in) + 3 Na(+)(in) + H(+)(in). It carries out the reaction D-aspartate(out) + K(+)(in) + 3 Na(+)(out) + H(+)(out) = D-aspartate(in) + K(+)(out) + 3 Na(+)(in) + H(+)(in). In terms of biological role, sodium-dependent, high-affinity amino acid transporter that mediates the uptake of L-glutamate and also L-aspartate and D-aspartate. Functions as a symporter that transports one amino acid molecule together with two or three Na(+) ions and one proton, in parallel with the counter-transport of one K(+) ion. Plays a redundant role in the rapid removal of released glutamate from the synaptic cleft, which is essential for terminating the postsynaptic action of glutamate. This Rattus norvegicus (Rat) protein is Excitatory amino acid transporter 1 (Slc1a3).